A 399-amino-acid chain; its full sequence is Tryptophan synthase beta chain (399 aa).

An N6-(pyridoxal phosphate)lysine modification is found at Lys-92.

It belongs to the TrpB family. In terms of assembly, tetramer of two alpha and two beta chains. Pyridoxal 5'-phosphate is required as a cofactor.

It carries out the reaction (1S,2R)-1-C-(indol-3-yl)glycerol 3-phosphate + L-serine = D-glyceraldehyde 3-phosphate + L-tryptophan + H2O. Its pathway is amino-acid biosynthesis; L-tryptophan biosynthesis; L-tryptophan from chorismate: step 5/5. In terms of biological role, the beta subunit is responsible for the synthesis of L-tryptophan from indole and L-serine. This is Tryptophan synthase beta chain from Acidithiobacillus ferrooxidans (strain ATCC 23270 / DSM 14882 / CIP 104768 / NCIMB 8455) (Ferrobacillus ferrooxidans (strain ATCC 23270)).